A 569-amino-acid polypeptide reads, in one-letter code: MDEGGMPLLPDSLVYQIFLSLGPADVLAAGLVCRQWQAVSRDEFLWREQFYRYYQVARDVPRHPAATSWYEEFRRLYDMVPCVEVQTLKEHTDQVLHLSFSHSGYQFASCSKDCTVKIWNNDLTISLLHSADMRPYNWSYTQFSQFNQDDSLLLASGVFLGPHNSSSGEIAVISLDSFALLSRVRNKPYDVFGCWLTETSLISGNLHRIGDVTSCSVLWLNNAFQDVESENVNVVKRLFKIQNLNASTIRTVMVADCSRFDSPDLLLDAGDQAGLPCRVFDLGGDTEEEATDPGLHTSGSGHVKEGLRRVFDSVLDGHGQLSDCALETKVAELLAQGHTKPPECPDADSRNKYLIFTTGCLTYSPHQIGIKQILPHQMTTAGPVLGEGRGSDAFFDALDHVIDVHGHIIGMGLSPDNRYLYVNSRAWPPGSVVADPMQPPPIAEEIDLLVFDLKTMREVKRALRAHRAYTPNDECFFIFLDVSRDFVASGAEDRHGYIWDRHYNICLAKLRHEDVVNSVAFSPQEQELLLTASDDATIKAWRSPRIVRVLQAPHPRPRPFFSWFASHRR.

The 47-residue stretch at Glu-3–Gln-49 folds into the F-box domain. The WD 1 repeat unit spans residues Glu-90 to His-129. Ser-151 carries the phosphoserine; by PLK4 modification. The D-box signature appears at Arg-308–Asp-316. WD repeat units lie at residues Thr-470–Lys-509 and Arg-511–Gln-551.

Belongs to the FBXW5 family. As to quaternary structure, part of the SCF (SKP1-CUL1-F-box) E3 ubiquitin-protein ligase complex SCF(FBXW5) composed of CUL1, SKP1, RBX1 and FBXW5. Component of the DCX(FBXW5) E3 ubiquitin ligase complex, at least composed of (CUL4A or CUL4B), DDB1, FBXW5 and RBX1. Interacts with CDC20, EPS8, TSC1, TSC2 and SASS6. Interacts with TNFAIP8L1; TNFAIP8L1 competes with TSC2 to bind FBXW5 increasing TSC2 stability by preventing its ubiquitination. Phosphorylated at Ser-151 by PLK4 during the G1/S transition, leading to inhibit its ability to ubiquitinate SASS6. In terms of processing, ubiquitinated and degraded by the APC/C complex during mitosis and G1 phase.

The protein resides in the cytoplasm. Its pathway is protein modification; protein ubiquitination. In terms of biological role, substrate recognition component of both SCF (SKP1-CUL1-F-box protein) and DCX (DDB1-CUL4-X-box) E3 ubiquitin-protein ligase complexes. Substrate recognition component of the SCF(FBXW5) E3 ubiquitin-protein ligase complex which mediates the ubiquitination and subsequent proteasomal degradation of SASS6 during S phase, leading to prevent centriole reduplication. The SCF(FBXW5) complex also mediates ubiquitination and degradation of actin-regulator EPS8 during G2 phase, leading to the transient degradation of EPS8 and subsequent cell shape changes required to allow mitotic progression. Substrate-specific adapter of the DCX(FBXW5) E3 ubiquitin-protein ligase complex which mediates the polyubiquitination and subsequent degradation of TSC2. May also act as a negative regulator of MAP3K7/TAK1 signaling in the interleukin-1B (IL1B) signaling pathway. This chain is F-box/WD repeat-containing protein 5 (Fbxw5), found in Rattus norvegicus (Rat).